A 53-amino-acid polypeptide reads, in one-letter code: ComX pheromone (53 aa).

A propeptide spanning residues Met-1–Tyr-46 is cleaved from the precursor. The 3'-geranyl-2',N2-cyclotryptophan moiety is linked to residue Trp-51.

Interacts directly with the sensor histidine kinase ComP and stimulates its activity. Post-translationally, trp-51 is modified by geranylation, which is essential for activity. Modified by the tryptophan prenyltransferase ComQ before export to the extracellular environment. The type of isoprenyl derivative differs among the different pherotypes and depends on ComX primary sequence.

It is found in the secreted. Functionally, part of a major quorum-sensing system that regulates the development of genetic competence. Acts through the activation of the two-component regulatory system ComP/ComA composed of a sensor histidine kinase, ComP, and a response regulator, ComA. The sequence is that of ComX pheromone from Bacillus mojavensis.